The chain runs to 238 residues: Ribonuclease PH (238 aa).

Phosphate is bound by residues Arg-86 and Gly-124–Arg-126.

Belongs to the RNase PH family. In terms of assembly, homohexameric ring arranged as a trimer of dimers.

It catalyses the reaction tRNA(n+1) + phosphate = tRNA(n) + a ribonucleoside 5'-diphosphate. Phosphorolytic 3'-5' exoribonuclease that plays an important role in tRNA 3'-end maturation. Removes nucleotide residues following the 3'-CCA terminus of tRNAs; can also add nucleotides to the ends of RNA molecules by using nucleoside diphosphates as substrates, but this may not be physiologically important. Probably plays a role in initiation of 16S rRNA degradation (leading to ribosome degradation) during starvation. The chain is Ribonuclease PH from Vibrio cholerae serotype O1 (strain ATCC 39315 / El Tor Inaba N16961).